Reading from the N-terminus, the 1563-residue chain is MDDPSMMPDLSHLSAEEREIIENVFKRQKDEEAKETQISQKASEELSELDKQITERKETSKKLVGTQDDAICQICQKTKFADGIGHKCFYCQLRSCARCGGRAQSKNKAIWACSLCQKRQQILAKTGKWFQPEEQPQPKISGSEPSPSPQPLTDDNVPEPQQRRAEPPDKMNTPNYQNNQQPRGMGMQPNHNQTQQNFMNQNQNSNQHPNQNHNQNQMQNPHQNQNHVQNNHQGANNHQQNNRRAMQQQPMSQNQANQINQMNQNQNQQQSHNQNMTQNQRNQTGPQNQQRTNDSRTMKQTPQQQPSQYQNNVGAAHQHHNQHGQQEQHHQQMNEQRTDNNRMRENTNGQGGMFNRQPSLEQTTPMNKYNHVEDDGMNQRPTFYTGNSENDQRQFDGQMQQGSQQNNQNQNQNNRNLRKNTVSRVTEEDYASSSNFESKKQRNNSSQSQSNTQGVRACPSTDDHLNRVKNRLHRQLRSMSSSEEDIIAGGGGNTLKMSTSAVVASGGKTAFHDDMGASNVQRLSEECNSEKDLLRYIYGDHKNSDSSSLGAGVGGSGGGGVLSGNSVLKSKSHALLKGSYQGGLDMQANRRRDKSLSLSPSRNDHFGTGSISGGDLLASRIRTFLSHPVTWQPSADQKKLIGHMILHRTENSAANGDLGLKIVGGRRTDTGKLGAFITQVKPGSVADTIGRLRPGDEVVEWNGQSLQNATYEQVYDSIAASRYDTSVELIVSRSAIIPGGDDFLNLTPSQMSSSAYSRVPSAYPSQFQRQLPNPDLFLDIHPALQQLSLPHSQSAVFPHNNTLTSRNRSTSSYYYSDVPDLGVPSNREMQESQAFGTGHIFGRIEVSFVYSHHDRQLSVALVRGFDLPPRSDGTPRNPYVKIFLLPDRSEKSRRQSAVIAETLMPVWDEVFYYNGLTEPMLLQRVLELTVWDYDKFGTNSFLGETLIDLASVPLDGEHSLMCILVDMDDDNPLRTVISIFKFHVIILTFLQRLKLRKASYNAPTRRPQSELNYYDHSSNYYDHISQNIDKQPHHHHLAPNDEENDEYIDDDELENDIDLATGGGARKSRTYRREKGMHGGHGYADWTQNHQRQSGYTSDHGYGRQNMIGRAYNRRQQRRPRSATALSQMEREDMYDPTRKHRDDNEYSMRESVRHGSQYYLGDQPLYEDGRYKISQGQMTPKQHNQQHQPHPLSQAHQQQQTAGVQPQHHQGFQQQQHPQQPNQQMQQMQPPMPNQGYYSDGSETLSVHSTNSMPTTMTTVNRRNMNANNTSNDNTSFAETPTANTNRVPIKETKQNSLASSSSVAGGGSAANNVMKERKKSLMTRFIPGRGAEGKRTGFARSEEVGIPGNLSSDRLTEPTPPFLKQASKESTDSAHSDKFARQCWLPVLADGPLGTFVDNLGPGQVVGRQVLASPVLGEIQIALMAGRSGIDVEIIKAKNLVVKPGVKVCPAPYVKVYLMEGKQCIAKAKTNAATKTTSPLFQQHLIFNDSPKKKTLQVTVLGDYGRMERKVFMGISQIRLEDLELGSQPLIGWYKLFHSSSLAGTGPVRKDSDVSVGGAQQ.

Positions 7 to 133 (MPDLSHLSAE…AKTGKWFQPE (127 aa)) constitute a RabBD domain. Positions 25–35 (FKRQKDEEAKE) are enriched in basic and acidic residues. Residues 25–50 (FKRQKDEEAKETQISQKASEELSELD) are disordered. The segment at 66 to 121 (TQDDAICQICQKTKFADGIGHKCFYCQLRSCARCGGRAQSKNKAIWACSLCQKRQQ) adopts an FYVE-type zinc-finger fold. The Zn(2+) site is built by Cys-72, Cys-75, Cys-88, Cys-91, Cys-96, Cys-99, Cys-113, and Cys-116. Disordered regions lie at residues 128-466 (KWFQ…DHLN) and 582-605 (GGLD…RNDH). The segment covering 172 to 182 (NTPNYQNNQQP) has biased composition (polar residues). Composition is skewed to low complexity over residues 190-284 (NHNQ…RNQT) and 300-316 (QTPQ…VGAA). A compositionally biased stretch (basic and acidic residues) spans 326 to 345 (QEQHHQQMNEQRTDNNRMRE). Composition is skewed to polar residues over residues 356–367 (RQPSLEQTTPMN) and 379–389 (QRPTFYTGNSE). The span at 395 to 415 (FDGQMQQGSQQNNQNQNQNNR) shows a compositional bias: low complexity. A PDZ domain is found at 643-733 (HMILHRTENS…DTSVELIVSR (91 aa)). Positions 840–962 (IFGRIEVSFV…PLDGEHSLMC (123 aa)) constitute a C2 1 domain. Disordered stretches follow at residues 1054-1163 (ENDI…YLGD), 1177-1311 (GQMT…GGSA), and 1346-1373 (VGIP…KEST). Positions 1086 to 1097 (WTQNHQRQSGYT) are enriched in polar residues. Residues 1112–1121 (YNRRQQRRPR) show a composition bias toward basic residues. Positions 1129 to 1154 (MEREDMYDPTRKHRDDNEYSMRESVR) are enriched in basic and acidic residues. Over residues 1181 to 1230 (PKQHNQQHQPHPLSQAHQQQQTAGVQPQHHQGFQQQQHPQQPNQQMQQMQ) the composition is skewed to low complexity. Positions 1242 to 1255 (GSETLSVHSTNSMP) are enriched in polar residues. Residues 1256–1277 (TTMTTVNRRNMNANNTSNDNTS) are compositionally biased toward low complexity. A compositionally biased stretch (polar residues) spans 1278 to 1288 (FAETPTANTNR). Over residues 1297 to 1311 (NSLASSSSVAGGGSA) the composition is skewed to low complexity. Positions 1417–1536 (VLGEIQIALM…LGSQPLIGWY (120 aa)) constitute a C2 2 domain.

In terms of tissue distribution, restricted to discrete puncta in synapse-rich regions of the nervous system including the nerve ring, the ventral nerve cord and the dorsal nerve cord. Localized expression was found in the head.

The protein localises to the synapse. Regulates the efficiency of a post-docking step of the release pathway. Acts after vesicle docking likely via regulating priming. May regulate the conformational changes in syntaxin. Binding of vesicles via rab-3[GTP] to Rim may signal the presence of a docked synaptic vesicle. Rim may then signal to unc-13 to change the conformation of syntaxin from the closed to the open state. Syntaxin could then engage synaptobrevin on the docked vesicle to form SNARE complexes and to prime the vesicle for release. Not required for the development or the structural organization of synapses. May play a role in regulating entry into the dauer state. This Caenorhabditis elegans protein is Rab-3-interacting molecule unc-10.